Here is a 362-residue protein sequence, read N- to C-terminus: Sulfoquinovose monooxygenase (362 aa).

This sequence belongs to the SsuD family.

It carries out the reaction 6-sulfo-D-quinovose + FMNH2 + O2 = 6-dehydro-D-glucose + FMN + sulfite + H2O + 2 H(+). Part of the alkanesulfonate monooxygenase (sulfo-ASMO) pathway, a D-sulfoquinovose degradation pathway that enables the complete utilization of all carbons within sulfoquinovose (SQ) with concomitant production of inorganic sulfite. Catalyzes the oxidative desulfurization of sulfoquinovose to sulfite and 6-dehydro-D-glucose. The chain is Sulfoquinovose monooxygenase from Novosphingobium aromaticivorans (strain ATCC 700278 / DSM 12444 / CCUG 56034 / CIP 105152 / NBRC 16084 / F199).